The following is a 415-amino-acid chain: Beta-1,4-glucuronyltransferase 1 (415 aa).

Residues 1–8 (MQMSYAIR) are Cytoplasmic-facing. The chain crosses the membrane as a helical; Signal-anchor for type II membrane protein span at residues 9 to 36 (CAFYQLLLAALMLVAMLQLLYLSLLSGL). The Lumenal portion of the chain corresponds to 37-415 (HGQEEQEQYF…ARYPNSPHRC (379 aa)). The N-linked (GlcNAc...) asparagine glycan is linked to asparagine 204. Residues aspartate 227 and aspartate 229 each contribute to the Mn(2+) site. A glycan (N-linked (GlcNAc...) asparagine) is linked at asparagine 300.

Belongs to the glycosyltransferase 49 family. As to quaternary structure, interacts with LARGE1 and LARGE2. Requires Mn(2+) as cofactor.

Its subcellular location is the golgi apparatus membrane. The enzyme catalyses 3-O-[beta-D-Xyl-(1-&gt;4)-Rib-ol-P-Rib-ol-P-3-beta-D-GalNAc-(1-&gt;3)-beta-D-GlcNAc-(1-&gt;4)-(O-6-P-alpha-D-Man)]-Thr-[protein] + UDP-alpha-D-glucuronate = 3-O-[beta-D-GlcA-(1-&gt;3)-beta-D-Xyl-(1-&gt;4)-Rib-ol-P-Rib-ol-P-3-beta-D-GalNAc-(1-&gt;3)-beta-D-GlcNAc-(1-&gt;4)-(O-6-P-alpha-D-Man)]-Thr-[protein] + UDP + H(+). It participates in protein modification; protein glycosylation. Functionally, beta-1,4-glucuronyltransferase involved in O-mannosylation of alpha-dystroglycan (DAG1). Transfers a glucuronic acid (GlcA) residue onto a xylose (Xyl) acceptor to produce the glucuronyl-beta-1,4-xylose-beta disaccharide primer, which is further elongated by LARGE1, during synthesis of phosphorylated O-mannosyl glycan. Phosphorylated O-mannosyl glycan is a carbohydrate structure present in alpha-dystroglycan (DAG1), which is required for binding laminin G-like domain-containing extracellular proteins with high affinity. Required for axon guidance; via its function in O-mannosylation of alpha-dystroglycan (DAG1). This chain is Beta-1,4-glucuronyltransferase 1, found in Mus musculus (Mouse).